Consider the following 161-residue polypeptide: Dihydrofolate reductase (161 aa).

The region spanning 2 to 161 (NISLIAAISK…YNYSFEILSR (160 aa)) is the DHFR domain. Substrate is bound at residue 6-8 (IAA). Residues 7-8 (AA) and 15-20 (IGYKNK) each bind NADP(+). Asp-28 provides a ligand contact to substrate. 44–47 (GRLT) provides a ligand contact to NADP(+). Residue Arg-59 coordinates substrate. Residues 64–66 (ISS) and 96–101 (IGGAKI) each bind NADP(+). Substrate is bound at residue Thr-115.

The protein belongs to the dihydrofolate reductase family.

The catalysed reaction is (6S)-5,6,7,8-tetrahydrofolate + NADP(+) = 7,8-dihydrofolate + NADPH + H(+). It functions in the pathway cofactor biosynthesis; tetrahydrofolate biosynthesis; 5,6,7,8-tetrahydrofolate from 7,8-dihydrofolate: step 1/1. Key enzyme in folate metabolism. Catalyzes an essential reaction for de novo glycine and purine synthesis, and for DNA precursor synthesis. The polypeptide is Dihydrofolate reductase (folA) (Buchnera aphidicola subsp. Acyrthosiphon pisum (strain APS) (Acyrthosiphon pisum symbiotic bacterium)).